A 371-amino-acid chain; its full sequence is Probable beta-1,3-galactosyltransferase 12 (371 aa).

The tract at residues methionine 1–serine 36 is disordered. The segment covering alanine 11 to serine 36 has biased composition (low complexity). Residues valine 46–alanine 66 form a helical; Signal-anchor for type II membrane protein membrane-spanning segment. An N-linked (GlcNAc...) asparagine glycan is attached at asparagine 291.

The protein belongs to the glycosyltransferase 31 family. It depends on Mn(2+) as a cofactor.

Its subcellular location is the golgi apparatus membrane. It functions in the pathway protein modification; protein glycosylation. Its function is as follows. Beta-1,3-galactosyltransferase that transfers galactose from UDP-galactose to substrates with a terminal glycosyl residue. The sequence is that of Probable beta-1,3-galactosyltransferase 12 (B3GALT12) from Arabidopsis thaliana (Mouse-ear cress).